The chain runs to 561 residues: Potassium-transporting ATPase potassium-binding subunit (561 aa).

A run of 12 helical transmembrane segments spans residues 2–22 (GQGLLQIGLTLCIVIAITPVL), 66–86 (IRAILYTNLFMGILVYSLIYF), 135–155 (ALGFLMFTSAATGLAVGIAFI), 177–197 (ILLPISVIGAIALVLLGVPQT), 253–273 (LIETIAMIAIPAAMIYTYGVF), 280–300 (AWLLFWMVFIVFVILVWVAAG), 327–347 (FGWAETALWAVMTTATMCGAV), 354–374 (LMPQGLFATLFNLFLQIIWGG), 378–398 (GTAYLFIYLILTVFLTGLMVG), 413–433 (IVLASLILLIHPIVVLIPSAI), 482–502 (LSTSLSILTGRYVPIIAMLLL), and 531–551 (AGIVLILGVLTFFPVLALGPI).

This sequence belongs to the KdpA family. The system is composed of three essential subunits: KdpA, KdpB and KdpC.

It is found in the cell inner membrane. Its function is as follows. Part of the high-affinity ATP-driven potassium transport (or Kdp) system, which catalyzes the hydrolysis of ATP coupled with the electrogenic transport of potassium into the cytoplasm. This subunit binds the periplasmic potassium ions and delivers the ions to the membrane domain of KdpB through an intramembrane tunnel. The sequence is that of Potassium-transporting ATPase potassium-binding subunit from Nostoc sp. (strain PCC 7120 / SAG 25.82 / UTEX 2576).